The chain runs to 733 residues: Polyribonucleotide nucleotidyltransferase (733 aa).

The disordered stretch occupies residues 404–424 (NYNMPPYSTGETGRVGSPKRR). Positions 516 and 522 each coordinate Mg(2+). Positions 582-641 (PRIITVHIPVDKIGEVIGPKGKMINQIQDDTGANISIEDDGTIFIGADNGDSAESARSMI) constitute a KH domain. Positions 653–725 (GERYLGTVVK…DRGKLSLVLA (73 aa)) constitute an S1 motif domain.

It belongs to the polyribonucleotide nucleotidyltransferase family. Mg(2+) is required as a cofactor.

The protein localises to the cytoplasm. It catalyses the reaction RNA(n+1) + phosphate = RNA(n) + a ribonucleoside 5'-diphosphate. In terms of biological role, involved in mRNA degradation. Catalyzes the phosphorolysis of single-stranded polyribonucleotides processively in the 3'- to 5'-direction. The protein is Polyribonucleotide nucleotidyltransferase of Cutibacterium acnes (strain DSM 16379 / KPA171202) (Propionibacterium acnes).